The following is a 389-amino-acid chain: Succinate--CoA ligase [ADP-forming] subunit beta (389 aa).

Positions 9–244 (KQLLAEYGIP…KTQEDETEVT (236 aa)) constitute an ATP-grasp domain. ATP-binding positions include Lys-46, 53-55 (GRG), Gly-102, and Glu-107. The Mg(2+) site is built by Asn-199 and Asp-213. Substrate contacts are provided by residues Asn-264 and 321-323 (GIV).

The protein belongs to the succinate/malate CoA ligase beta subunit family. Heterotetramer of two alpha and two beta subunits. Mg(2+) is required as a cofactor.

It catalyses the reaction succinate + ATP + CoA = succinyl-CoA + ADP + phosphate. The enzyme catalyses GTP + succinate + CoA = succinyl-CoA + GDP + phosphate. It participates in carbohydrate metabolism; tricarboxylic acid cycle; succinate from succinyl-CoA (ligase route): step 1/1. Functionally, succinyl-CoA synthetase functions in the citric acid cycle (TCA), coupling the hydrolysis of succinyl-CoA to the synthesis of either ATP or GTP and thus represents the only step of substrate-level phosphorylation in the TCA. The beta subunit provides nucleotide specificity of the enzyme and binds the substrate succinate, while the binding sites for coenzyme A and phosphate are found in the alpha subunit. This Xanthomonas oryzae pv. oryzae (strain MAFF 311018) protein is Succinate--CoA ligase [ADP-forming] subunit beta.